We begin with the raw amino-acid sequence, 617 residues long: Solute carrier family 2, facilitated glucose transporter member 12 (617 aa).

The interval 1 to 29 (MVPVENTEGPSLLNQKGTAVETEGSGSRH) is disordered. Residues 1–44 (MVPVENTEGPSLLNQKGTAVETEGSGSRHPPWARGCGMFTFLSS) are Cytoplasmic-facing. The span at 8–17 (EGPSLLNQKG) shows a compositional bias: polar residues. Residues 45-65 (VTAAVSGLLVGYELGIISGAL) traverse the membrane as a helical segment. The Extracellular segment spans residues 66-80 (LQIKTLLALSCHEQE). The chain crosses the membrane as a helical span at residues 81 to 101 (MVVSSLVIGALLASLTGGVLI). Residues 102-115 (DRYGRRTAIILSSC) lie on the Cytoplasmic side of the membrane. A helical transmembrane segment spans residues 116-136 (LLGLGSLVLILSLSYTVLIVG). R137 is a topological domain (extracellular). A helical transmembrane segment spans residues 138–158 (IAIGVSISLSSIATCVYIAEI). The Cytoplasmic portion of the chain corresponds to 159–172 (APQHRRGLLVSLNE). Residues 173–193 (LMIVIGILSAYISNYAFANVF) form a helical membrane-spanning segment. Residues 194–197 (HGWK) lie on the Extracellular side of the membrane. A helical transmembrane segment spans residues 198–218 (YMFGLVIPLGVLQAIAMYFLP). Residues 219–278 (PSPRFLVMKGQEGAASKVLGRLRALSDTTEELTVIKSSLKDEYQYSFWDLFRSKDNMRTR) lie on the Cytoplasmic side of the membrane. Residues 279-299 (IMIGLTLVFFVQITGQPNILF) form a helical membrane-spanning segment. Residues 300–317 (YASTVLKSVGFQSNEAAS) are Extracellular-facing. The chain crosses the membrane as a helical span at residues 318 to 338 (LASTGVGVVKVISTIPATLLV). At 339 to 345 (DHVGSKT) the chain is on the cytoplasmic side. Residues 346 to 366 (FLCIGSSVMAASLVTMGIVNL) form a helical membrane-spanning segment. Residues 367–466 (NIHMNFTHIC…PAFLKWLSLA (100 aa)) lie on the Extracellular side of the membrane. Residues N371, N383, N396, and N401 are each glycosylated (N-linked (GlcNAc...) asparagine). The helical transmembrane segment at 467 to 487 (SLLVYVAAFSIGLGPMPWLVL) threads the bilayer. Over 488 to 498 (SEIFPGGIRGR) the chain is Cytoplasmic. A helical transmembrane segment spans residues 499–519 (AMALTSSMNWGINLLISLTFL). The Extracellular segment spans residues 520–528 (TVTDLIGLP). A helical membrane pass occupies residues 529 to 549 (WVCFIYTIMSLASLLFVVMFI). At 550–617 (PETKGCSLEQ…GQSRQLSPET (68 aa)) the chain is on the cytoplasmic side.

This sequence belongs to the major facilitator superfamily. Sugar transporter (TC 2.A.1.1) family. Glucose transporter subfamily. Predominantly expressed in skeletal muscle, heart and prostate, with lower levels in brain, placenta and kidney.

The protein localises to the cell membrane. Its subcellular location is the endomembrane system. It localises to the cytoplasm. It is found in the perinuclear region. The enzyme catalyses D-glucose(out) = D-glucose(in). In terms of biological role, insulin-independent facilitative glucose transporter. The polypeptide is Solute carrier family 2, facilitated glucose transporter member 12 (Homo sapiens (Human)).